The following is a 473-amino-acid chain: Heavy metal-associated isoprenylated plant protein 32 (473 aa).

The region spanning 9–72 is the HMA domain; sequence IQTCVLKVNI…KLAKSGKHAE (64 aa). Positions 20 and 23 each coordinate a metal cation. Disordered stretches follow at residues 96–139, 162–230, and 246–343; these read QIDH…KMGQ, KLPP…PNMT, and ANLA…QNMS. Residues 118 to 131 are compositionally biased toward gly residues; it reads KNGGGGGGGGGGGN. Residues 187 to 217 show a composition bias toward acidic residues; sequence PEDDDDDDFSDEFDDEFTDDDDDEFDDEFDD. Positions 253 to 339 are enriched in gly residues; the sequence is AKNGGKGAPA…GFRPMGGGGP (87 aa). Cys-470 is modified (cysteine methyl ester). Residue Cys-470 is the site of S-farnesyl cysteine attachment. Residues 471 to 473 constitute a propeptide, removed in mature form; the sequence is DIM.

Belongs to the HIPP family.

Heavy-metal-binding protein. The sequence is that of Heavy metal-associated isoprenylated plant protein 32 from Arabidopsis thaliana (Mouse-ear cress).